A 198-amino-acid polypeptide reads, in one-letter code: Recombination protein RecR (198 aa).

The C4-type zinc finger occupies 57-72 (CEKCNTFTEAQICEVC). A Toprim domain is found at 80-175 (TLLCVVETPA…AVTRLARGVP (96 aa)).

It belongs to the RecR family.

Functionally, may play a role in DNA repair. It seems to be involved in an RecBC-independent recombinational process of DNA repair. It may act with RecF and RecO. This Burkholderia vietnamiensis (strain G4 / LMG 22486) (Burkholderia cepacia (strain R1808)) protein is Recombination protein RecR.